Consider the following 154-residue polypeptide: Histone H2B type F-M (154 aa).

A compositionally biased stretch (low complexity) spans 1-18 (MAAASAMAEASSETTSEE). The disordered stretch occupies residues 1-61 (MAAASAMAEA…RGDSFGDSFT (61 aa)). Basic residues predominate over residues 34-50 (QKQKRRGCRGSRRRHAN).

This sequence belongs to the histone H2B family. As to quaternary structure, the nucleosome is a histone octamer containing two molecules each of H2A, H2B, H3 and H4 assembled in one H3-H4 heterotetramer and two H2A-H2B heterodimers. The octamer wraps approximately 147 bp of DNA.

It localises to the nucleus. It is found in the chromosome. Core component of nucleosome. Nucleosomes wrap and compact DNA into chromatin, limiting DNA accessibility to the cellular machineries which require DNA as a template. Histones thereby play a central role in transcription regulation, DNA repair, DNA replication and chromosomal stability. DNA accessibility is regulated via a complex set of post-translational modifications of histones, also called histone code, and nucleosome remodeling. The sequence is that of Histone H2B type F-M from Homo sapiens (Human).